Reading from the N-terminus, the 248-residue chain is Large ribosomal subunit protein uL30B (248 aa).

The segment at 1-45 (MSQKKQKIQVEQKVPENVAKKTQRDSKLRDAVAKRRTERLAANKT) is disordered. Basic and acidic residues predominate over residues 8–41 (IQVEQKVPENVAKKTQRDSKLRDAVAKRRTERLA).

This sequence belongs to the universal ribosomal protein uL30 family.

Binds to G-rich structures in 28S rRNA and in mRNAs. Plays a regulatory role in the translation apparatus; inhibits cell-free translation of mRNAs. The chain is Large ribosomal subunit protein uL30B (Rpl7-2) from Paramecium tetraurelia.